A 641-amino-acid chain; its full sequence is Phosphomethylpyrimidine synthase (641 aa).

Over residues 1–13 (MNIRSNPDTTRPA) the composition is skewed to polar residues. The interval 1–21 (MNIRSNPDTTRPAVTTGGLPS) is disordered. Substrate is bound by residues asparagine 221, methionine 250, tyrosine 279, histidine 315, 335–337 (SRG), 376–379 (DGLR), and glutamate 415. Histidine 419 contacts Zn(2+). Tyrosine 442 contributes to the substrate binding site. Residue histidine 483 participates in Zn(2+) binding. Cysteine 563, cysteine 566, and cysteine 571 together coordinate [4Fe-4S] cluster.

The protein belongs to the ThiC family. Homodimer. [4Fe-4S] cluster is required as a cofactor.

The enzyme catalyses 5-amino-1-(5-phospho-beta-D-ribosyl)imidazole + S-adenosyl-L-methionine = 4-amino-2-methyl-5-(phosphooxymethyl)pyrimidine + CO + 5'-deoxyadenosine + formate + L-methionine + 3 H(+). Its pathway is cofactor biosynthesis; thiamine diphosphate biosynthesis. Catalyzes the synthesis of the hydroxymethylpyrimidine phosphate (HMP-P) moiety of thiamine from aminoimidazole ribotide (AIR) in a radical S-adenosyl-L-methionine (SAM)-dependent reaction. This chain is Phosphomethylpyrimidine synthase, found in Rhodopseudomonas palustris (strain BisB5).